Consider the following 102-residue polypeptide: RNA-binding protein Hfq (102 aa).

Residues 9-68 (DPFLNALRRERVPVSIYLVNGIKLQGQIESFDQFVILLKNTVSQMVYKHAISTVVPSRPV) enclose the Sm domain. A disordered region spans residues 63-102 (VPSRPVSHHSNNASGGTSSNYHHGSSAQNTSAQQDSEETE). Residues 70 to 96 (HHSNNASGGTSSNYHHGSSAQNTSAQQ) are compositionally biased toward polar residues.

The protein belongs to the Hfq family. As to quaternary structure, homohexamer.

In terms of biological role, RNA chaperone that binds small regulatory RNA (sRNAs) and mRNAs to facilitate mRNA translational regulation in response to envelope stress, environmental stress and changes in metabolite concentrations. Also binds with high specificity to tRNAs. This chain is RNA-binding protein Hfq, found in Shigella boydii serotype 18 (strain CDC 3083-94 / BS512).